A 164-amino-acid polypeptide reads, in one-letter code: Transcription elongation factor GreA (164 aa).

This sequence belongs to the GreA/GreB family.

In terms of biological role, necessary for efficient RNA polymerase transcription elongation past template-encoded arresting sites. The arresting sites in DNA have the property of trapping a certain fraction of elongating RNA polymerases that pass through, resulting in locked ternary complexes. Cleavage of the nascent transcript by cleavage factors such as GreA or GreB allows the resumption of elongation from the new 3'terminus. GreA releases sequences of 2 to 3 nucleotides. In Helicobacter pylori (strain Shi470), this protein is Transcription elongation factor GreA.